A 134-amino-acid chain; its full sequence is Snaclec alboaggregin-A subunit alpha' (134 aa).

A C-type lectin domain is found at 1 to 134; it reads DFHCLPGWSA…NPFVCKFPPQ (134 aa). 3 disulfides stabilise this stretch: Cys4–Cys15, Cys32–Cys129, and Cys104–Cys121.

The protein belongs to the snaclec family. In terms of assembly, heterotetramer of the subunits alpha, alpha', beta and beta'; disulfide-linked. In terms of tissue distribution, expressed by the venom gland.

Its subcellular location is the secreted. Potent platelet activator that aggregates platelets via both GPIbalpha (GP1BA) and GPVI (GP6). Induces a tyrosine phosphorylation profile in platelets that resembles this produced by collagen, involving the time dependent tyrosine phosphorylation of Fc receptor gamma chain (FCGR1A), phospholipase Cgamma2 (PLCG2), and LAT. The protein is Snaclec alboaggregin-A subunit alpha' of Trimeresurus albolabris (White-lipped pit viper).